Here is a 450-residue protein sequence, read N- to C-terminus: Ceramide glucosyltransferase (450 aa).

Over 1–8 the chain is Lumenal; it reads MSDSGTLS. Residues 9-29 form a helical membrane-spanning segment; the sequence is LIGGIVFLVLWVVVWSICLLG. Residues 30 to 337 are Cytoplasmic-facing; the sequence is WRTARIRYAH…IRVRKKMTLA (308 aa). Residue Asp96 is a short sequence motif, D1. Asp148 is a short sequence motif (D2). Position 286 (Asp286) is a short sequence motif, D3. Asp286 serves as the catalytic Proton acceptor. Positions 323 to 327 match the (Q/R)XXRW motif; sequence RRVRW. The helical transmembrane segment at 338–358 threads the bilayer; the sequence is ATLLEPLTESIISGLYGAWAI. Residues 359–361 lie on the Lumenal side of the membrane; that stretch reads SRL. The helical transmembrane segment at 362 to 382 threads the bilayer; sequence LGGNILPLFLLHMAAWISVDI. Over 383-401 the chain is Cytoplasmic; sequence STKRALETNIKGIGPPESK. A helical transmembrane segment spans residues 402–422; it reads VTFLMAWAARECLALPIWMLA. Residues 423-450 lie on the Lumenal side of the membrane; sequence MTSSEVVWRGQKYKIIASGEAIRLGDRN.

Belongs to the glycosyltransferase 2 family.

The protein resides in the golgi apparatus membrane. It carries out the reaction an N-acylsphing-4-enine + UDP-alpha-D-glucose = a beta-D-glucosyl-(1&lt;-&gt;1')-N-acylsphing-4-enine + UDP + H(+). The protein operates within lipid metabolism; sphingolipid metabolism. In terms of biological role, catalyzes the final step in the biosynthesis of the membrane lipid glucosylceramide (GluCer), the transfer of glucose to ceramide. Glucosylceramides play important roles in growth, differentiation and pathogenicity. Essential factor in determining the success of fungal infection by regulating survival of yeast cells during the initial colonization of the host lung. The sequence is that of Ceramide glucosyltransferase from Cryptococcus neoformans var. grubii serotype A (strain H99 / ATCC 208821 / CBS 10515 / FGSC 9487) (Filobasidiella neoformans var. grubii).